The primary structure comprises 928 residues: DNA-binding protein RFX6 (928 aa).

2 disordered regions span residues 1-20 (MAKV…APQL) and 50-98 (EGQP…SKTK). A DNA-binding region (RFX-type winged-helix) is located at residues 124-199 (TLQWLEENYI…YHYYGIGIKE (76 aa)).

Belongs to the RFX family. In terms of assembly, interacts with RFX3. In terms of tissue distribution, expressed in pancreas. Expressed in pancreatic beta-cells (insulin-positive cells) and alpha-cells (glucagon-positive cells) (at protein level). Specifically expressed in pancreas, small intestine and colon. Expressed in endocrine cells in the islets.

Its subcellular location is the nucleus. Its function is as follows. Transcription factor required to direct islet cell differentiation during endocrine pancreas development. Specifically required for the differentiation of 4 of the 5 islet cell types and for the production of insulin. Not required for pancreatic PP (polypeptide-producing) cells differentiation. Acts downstream of NEUROG3 and regulates the transcription factors involved in beta-cell maturation and function, thereby restricting the expression of the beta-cell differentiation and specification genes, and thus the beta-cell fate choice. Activates transcription by forming a heterodimer with RFX3 and binding to the X-box in the promoter of target genes. Involved in glucose-stimulated insulin secretion by promoting insulin and L-type calcium channel gene transcription. The chain is DNA-binding protein RFX6 (RFX6) from Homo sapiens (Human).